The following is a 305-amino-acid chain: Peroxisome assembly protein 26 (305 aa).

Positions 1–25 (MKSDCSTSAAPFRGLGGPLRSSEPV) are disordered. Topologically, residues 1-246 (MKSDCSTSAA…RQLWDSAVSH (246 aa)) are cytoplasmic. The chain crosses the membrane as a helical; Signal-anchor for type II membrane protein span at residues 247–267 (FFSLPFKKSLLAALILCLLVV). At 268–305 (RFDPASPSSLPSLYKLAQLFRWIRKAASSRLYQLRIRD) the chain is on the peroxisomal matrix side.

This sequence belongs to the peroxin-26 family. Interacts (via its cytoplasmic domain) with PEX6; interaction is direct and is ATP-dependent. Interacts with PEX1; interaction is indirect and is mediated via interaction with PEX6.

It localises to the peroxisome membrane. Functionally, peroxisomal docking factor that anchors PEX1 and PEX6 to peroxisome membranes. PEX26 is therefore required for the formation of the PEX1-PEX6 AAA ATPase complex, a complex that mediates the extraction of the PEX5 receptor from peroxisomal membrane. The sequence is that of Peroxisome assembly protein 26 (PEX26) from Macaca fascicularis (Crab-eating macaque).